The following is a 155-amino-acid chain: SsrA-binding protein (155 aa).

Belongs to the SmpB family.

The protein resides in the cytoplasm. In terms of biological role, required for rescue of stalled ribosomes mediated by trans-translation. Binds to transfer-messenger RNA (tmRNA), required for stable association of tmRNA with ribosomes. tmRNA and SmpB together mimic tRNA shape, replacing the anticodon stem-loop with SmpB. tmRNA is encoded by the ssrA gene; the 2 termini fold to resemble tRNA(Ala) and it encodes a 'tag peptide', a short internal open reading frame. During trans-translation Ala-aminoacylated tmRNA acts like a tRNA, entering the A-site of stalled ribosomes, displacing the stalled mRNA. The ribosome then switches to translate the ORF on the tmRNA; the nascent peptide is terminated with the 'tag peptide' encoded by the tmRNA and targeted for degradation. The ribosome is freed to recommence translation, which seems to be the essential function of trans-translation. The sequence is that of SsrA-binding protein from Bacillus cytotoxicus (strain DSM 22905 / CIP 110041 / 391-98 / NVH 391-98).